A 1040-amino-acid chain; its full sequence is Alpha-mannosidase 2C1 (1040 aa).

Residues His260, Asp262, Asp372, and His577 each contribute to the Co(2+) site. The Nucleophile role is filled by Asp372.

This sequence belongs to the glycosyl hydrolase 38 family. Requires Co(2+) as cofactor.

It is found in the cytoplasm. The catalysed reaction is Hydrolysis of terminal, non-reducing alpha-D-mannose residues in alpha-D-mannosides.. Its activity is regulated as follows. Strongly inhibited by swainsonine. Also inhibited to a lesser extent by deoxymannojirimycin (DMM). Cleaves alpha 1,2-, alpha 1,3-, and alpha 1,6-linked mannose residues on cytoplasmic free oligosaccharides generated by N-glycoprotein degradation pathways. This Homo sapiens (Human) protein is Alpha-mannosidase 2C1 (MAN2C1).